The following is a 448-amino-acid chain: Nicotinate phosphoribosyltransferase pncB1 (448 aa).

A disordered region spans residues 1 to 21; the sequence is MGPPPAARRREGEPDNQDPAG. The residue at position 212 (His-212) is a Phosphohistidine. Residues 353–372 form a disordered region; sequence RSSYKESPGGRKEALRRSRA.

This sequence belongs to the NAPRTase family. Transiently phosphorylated on a His residue during the reaction cycle. Phosphorylation strongly increases the affinity for substrates and increases the rate of nicotinate D-ribonucleotide production. Dephosphorylation regenerates the low-affinity form of the enzyme, leading to product release.

It catalyses the reaction nicotinate + 5-phospho-alpha-D-ribose 1-diphosphate + ATP + H2O = nicotinate beta-D-ribonucleotide + ADP + phosphate + diphosphate. It functions in the pathway cofactor biosynthesis; NAD(+) biosynthesis; nicotinate D-ribonucleotide from nicotinate: step 1/1. Involved in the Preiss-Handler pathway, which is a recycling route that permits the salvage of free nicotinamide (NM) and nicotinic acid (Na) involved in the NAD biosynthesis. Catalyzes the synthesis of beta-nicotinate D-ribonucleotide from nicotinate and 5-phospho-D-ribose 1-phosphate at the expense of ATP. It is not able to use nicotinamide. PncB1 contributes to basal NAD level. This Mycobacterium tuberculosis (strain ATCC 25618 / H37Rv) protein is Nicotinate phosphoribosyltransferase pncB1 (pncB1).